The sequence spans 492 residues: T-box transcription factor TBX5-A (492 aa).

The interval 1 to 43 is disordered; the sequence is MADSEDTFRLQNSPSDSEPKDLQNEGKSDKQNAAVSKSPSSQT. Residues 17–30 show a composition bias toward basic and acidic residues; that stretch reads SEPKDLQNEGKSDK. The span at 31-43 shows a compositional bias: polar residues; sequence QNAAVSKSPSSQT. A DNA-binding region (T-box) is located at residues 62 to 237; that stretch reads LWTKFHEVGT…NNPFAKGFRG (176 aa). A disordered region spans residues 331-352; that stretch reads AGEHPYKKPYVESSSSEDDHYY.

Monomer. Homodimer (via the T-box); binds DNA as homodimer. Expressed in the dorsal optic cup of developing eye, pectoral fin buds and heart. At 31 hpf, when the pectoral fin buds have begun bulging outwards, restricted expression is detected throughout the mesenchyme of the early fin buds and these high levels of expression continue until later stages.

It is found in the nucleus. Its subcellular location is the cytoplasm. Functionally, required for pectoral fin formation. Together with tbx5b, involved in eye and heart development. Required for the looping stage of heart development. May bind to the core DNA motif of promoters. The polypeptide is T-box transcription factor TBX5-A (tbx5a) (Danio rerio (Zebrafish)).